The sequence spans 163 residues: Type II secretion system protein M (163 aa).

The Cytoplasmic segment spans residues 1-19; that stretch reads MMDKLQGWWRSISAREQRL. The helical transmembrane segment at 20-40 threads the bilayer; sequence VAVGGSCLLIGFCYWIVWQPI. Residues 41-163 lie on the Periplasmic side of the membrane; it reads ANRIAERERQ…VRRLQLSRPQ (123 aa).

It belongs to the GSP M family. In terms of assembly, type II secretion system is composed of four main components: the outer membrane complex, the inner membrane complex, the cytoplasmic secretion ATPase and the periplasm-spanning pseudopilus. Forms homodimers. Interacts with ExeL/GspL. Interacts with ExeE/GspE and ExeF/GspF.

It localises to the cell inner membrane. Inner membrane component of the type II secretion system required for the energy-dependent secretion of extracellular factors such as proteases and toxins from the periplasm. Plays a role in the complex assembly and recruits ExeL resulting in a stable complex in the inner membrane. Provides thus a link between the energy-providing ExeE protein in the cytoplasm and the rest of the T2SS machinery. In Aeromonas hydrophila, this protein is Type II secretion system protein M (exeM).